The primary structure comprises 284 residues: Tropomyosin (284 aa).

The stretch at 1 to 284 forms a coiled coil; sequence MDAIKKKMQA…DQTFAEIAGY (284 aa). A disordered region spans residues 103–133; that stretch reads EEKLATTTEKLEEASKAADESERNRKVLEGR.

Belongs to the tropomyosin family. As to quaternary structure, homodimer.

Tropomyosin, in association with the troponin complex, plays a central role in the calcium dependent regulation of muscle contraction. This Chlamys nipponensis akazara (Akazara scallop) protein is Tropomyosin.